Consider the following 212-residue polypeptide: Cytidylate kinase (212 aa).

Residue 7 to 15 participates in ATP binding; sequence GPAASGKGT.

Belongs to the cytidylate kinase family. Type 1 subfamily.

The protein localises to the cytoplasm. The catalysed reaction is CMP + ATP = CDP + ADP. The enzyme catalyses dCMP + ATP = dCDP + ADP. The chain is Cytidylate kinase from Bradyrhizobium diazoefficiens (strain JCM 10833 / BCRC 13528 / IAM 13628 / NBRC 14792 / USDA 110).